The sequence spans 161 residues: Phosphopantetheine adenylyltransferase (161 aa).

Ser-11 is a substrate binding site. Residues 11-12 and His-19 contribute to the ATP site; that span reads SF. Residues Lys-43, Leu-75, and Arg-89 each coordinate substrate. Residues 90–92, Glu-100, and 125–131 each bind ATP; these read GLR and YSYLSSS.

It belongs to the bacterial CoaD family. Homohexamer. It depends on Mg(2+) as a cofactor.

Its subcellular location is the cytoplasm. It carries out the reaction (R)-4'-phosphopantetheine + ATP + H(+) = 3'-dephospho-CoA + diphosphate. The protein operates within cofactor biosynthesis; coenzyme A biosynthesis; CoA from (R)-pantothenate: step 4/5. Reversibly transfers an adenylyl group from ATP to 4'-phosphopantetheine, yielding dephospho-CoA (dPCoA) and pyrophosphate. The protein is Phosphopantetheine adenylyltransferase of Geobacter sp. (strain M21).